The primary structure comprises 67 residues: ATP synthase F(0) complex subunit 8 (67 aa).

Residues 8-24 form a helical membrane-spanning segment; the sequence is TWFTVILSMIISLFMLL. N6-acetyllysine; alternate is present on K54. Position 54 is an N6-succinyllysine; alternate (K54). K57 is subject to N6-acetyllysine.

This sequence belongs to the ATPase protein 8 family. In terms of assembly, component of the ATP synthase complex composed at least of ATP5F1A/subunit alpha, ATP5F1B/subunit beta, ATP5MC1/subunit c (homooctomer), MT-ATP6/subunit a, MT-ATP8/subunit 8, ATP5ME/subunit e, ATP5MF/subunit f, ATP5MG/subunit g, ATP5MK/subunit k, ATP5MJ/subunit j, ATP5F1C/subunit gamma, ATP5F1D/subunit delta, ATP5F1E/subunit epsilon, ATP5PF/subunit F6, ATP5PB/subunit b, ATP5PD/subunit d, ATP5PO/subunit OSCP. ATP synthase complex consists of a soluble F(1) head domain (subunits alpha(3) and beta(3)) - the catalytic core - and a membrane F(0) domain - the membrane proton channel (subunits c, a, 8, e, f, g, k and j). These two domains are linked by a central stalk (subunits gamma, delta, and epsilon) rotating inside the F1 region and a stationary peripheral stalk (subunits F6, b, d, and OSCP). Interacts with PRICKLE3.

It localises to the mitochondrion membrane. Its function is as follows. Subunit 8, of the mitochondrial membrane ATP synthase complex (F(1)F(0) ATP synthase or Complex V) that produces ATP from ADP in the presence of a proton gradient across the membrane which is generated by electron transport complexes of the respiratory chain. ATP synthase complex consist of a soluble F(1) head domain - the catalytic core - and a membrane F(1) domain - the membrane proton channel. These two domains are linked by a central stalk rotating inside the F(1) region and a stationary peripheral stalk. During catalysis, ATP synthesis in the catalytic domain of F(1) is coupled via a rotary mechanism of the central stalk subunits to proton translocation. In vivo, can only synthesize ATP although its ATP hydrolase activity can be activated artificially in vitro. Part of the complex F(0) domain. The sequence is that of ATP synthase F(0) complex subunit 8 from Cavia porcellus (Guinea pig).